The chain runs to 123 residues: UPF0102 protein CLM_2733 (123 aa).

This sequence belongs to the UPF0102 family.

This chain is UPF0102 protein CLM_2733, found in Clostridium botulinum (strain Kyoto / Type A2).